Here is a 146-residue protein sequence, read N- to C-terminus: MEYSYIPSAALYNNADIFQFFPRNKRLNSHQKSRLDEHARKMAAFMMERQEEYRYYENLANQEQFSDDNGMESGFCSGATSTGQSASTSPAPVQLIPNPFFDPEYVAAKTQSPVKLVTNPFFNPELVEEIKKKSQKRNEKSAPVSA.

The disordered stretch occupies residues aspartate 67–valine 93. Positions serine 77–proline 92 are enriched in low complexity.

This is an uncharacterized protein from Caenorhabditis elegans.